Consider the following 163-residue polypeptide: Low molecular weight protein-tyrosine phosphatase A (163 aa).

The Nucleophile role is filled by Cys-11. Arg-17 is a catalytic residue. The active-site Proton donor is the Asp-126.

Belongs to the low molecular weight phosphotyrosine protein phosphatase family.

The enzyme catalyses O-phospho-L-tyrosyl-[protein] + H2O = L-tyrosyl-[protein] + phosphate. Its function is as follows. Key virulence factor required for mycobacterial survival within host macrophages. Exhibits protein tyrosine phosphatase activity. Supports mycobacteria survival during infection by modulation of the phagosome maturation and modulation of the normal host signaling pathways, including host innate immune responses and cell apoptosis. This is Low molecular weight protein-tyrosine phosphatase A (ptpA) from Mycobacterium bovis (strain ATCC BAA-935 / AF2122/97).